The chain runs to 474 residues: Semenogelin-2 (474 aa).

The first 23 residues, 1 to 23 (MKSIILFVLSLLLILEKQAAVMG), serve as a signal peptide directing secretion. 5 disordered regions span residues 24-62 (QKGG…SKGS), 132-158 (GGQA…LSSQ), 173-194 (KEQA…QSSY), 226-247 (VREE…DRLQ), and 272-474 (NLNQ…SSTE). Composition is skewed to polar residues over residues 31–40 (QLPSGSSQFP), 137–158 (RGTQ…LSSQ), and 174–194 (EQAS…QSSY). The segment covering 292–310 (RTEERQLNHGEKSVQKDVS) has biased composition (basic and acidic residues). Over residues 325-334 (KSQNQVTIHS) the composition is skewed to polar residues. Positions 335–346 (QDQEHGHKENKM) are enriched in basic and acidic residues. Over residues 372-397 (GSISIQTEEQIHGKSQNQVRIPSQAQ) the composition is skewed to polar residues. Residues 399–426 (YGHKENKISYRSSSTEERRLNSGEKDVQ) are compositionally biased toward basic and acidic residues. Over residues 445–455 (KSQNQVTIPSQ) the composition is skewed to polar residues. Residues 456–465 (DQEHGHKENK) show a composition bias toward basic and acidic residues.

The protein belongs to the semenogelin family. In terms of assembly, interacts with SERPINA5.

It localises to the secreted. Its function is as follows. Participates in the formation of a gel matrix (sperm coagulum) entrapping the accessory gland secretions and ejaculated spermatozoa. The polypeptide is Semenogelin-2 (SEMG2) (Gorilla gorilla gorilla (Western lowland gorilla)).